The sequence spans 212 residues: Ras-related protein Rab-2A (212 aa).

Gly-16, Val-17, Gly-18, Lys-19, Ser-20, Cys-21, and Thr-38 together coordinate GTP. Ser-20 is a binding site for Mg(2+). Positions 37 to 42 (LTIGVE) match the Switch 1 motif. Mg(2+) is bound by residues Thr-38 and Asp-61. A Switch 2 motif is present at residues 63 to 72 (AGQESFRSIT). Positions 64, 119, 120, 122, 150, and 151 each coordinate GTP. 2 S-geranylgeranyl cysteine lipidation sites follow: Cys-211 and Cys-212.

It belongs to the small GTPase superfamily. Rab family. Interacts with PRKCI. Interacts with TRIP11. Interacts (in GTP-bound form) with GARIN1B. It depends on Mg(2+) as a cofactor. In terms of processing, prenylated. Prenylation is required for association with cellular membranes.

The protein localises to the endoplasmic reticulum-Golgi intermediate compartment membrane. The protein resides in the melanosome. It localises to the endoplasmic reticulum membrane. It is found in the golgi apparatus membrane. Its subcellular location is the cytoplasmic vesicle. The protein localises to the secretory vesicle. The protein resides in the acrosome. It catalyses the reaction GTP + H2O = GDP + phosphate + H(+). Regulated by guanine nucleotide exchange factors (GEFs) which promote the exchange of bound GDP for free GTP, GTPase activating proteins (GAPs) which increase the GTP hydrolysis activity, and GDP dissociation inhibitors (GDIs) which inhibit the dissociation of the nucleotide from the GTPase. The small GTPases Rab are key regulators of intracellular membrane trafficking, from the formation of transport vesicles to their fusion with membranes. Rabs cycle between active GTP-bound and inactive GDP-bound states. In their active state, drive transport of vesicular carriers from donor organelles to acceptor organelles to regulate the membrane traffic that maintains organelle identity and morphology. RAB2A regulates autophagy by promoting autophagosome-lysosome fusion via recruitment of the HOPS endosomal tethering complex; this process involves autophagosomal RAB2A and lysosomal RAB39A recruitment of HOPS subcomplexes VPS39-VPS11 and VPS41-VPS16-VPS18-VPS33A, respectively, which assemble into a functional complex to mediate membrane tethering and SNAREs-driven membrane fusion. Required for protein transport from the endoplasmic reticulum to the Golgi complex. Regulates the compacted morphology of the Golgi. Together with RAB2B, redundantly required for efficient autophagic flux. In Gallus gallus (Chicken), this protein is Ras-related protein Rab-2A (RAB2A).